The primary structure comprises 255 residues: NAD kinase (255 aa).

Catalysis depends on Asp44, which acts as the Proton acceptor. Residues 44 to 45, His49, 114 to 115, Asp144, Ala152, 155 to 160, and Gln216 each bind NAD(+); these read DG, NE, and SAYNLS.

The protein belongs to the NAD kinase family. It depends on a divalent metal cation as a cofactor.

It localises to the cytoplasm. It carries out the reaction NAD(+) + ATP = ADP + NADP(+) + H(+). Its function is as follows. Involved in the regulation of the intracellular balance of NAD and NADP, and is a key enzyme in the biosynthesis of NADP. Catalyzes specifically the phosphorylation on 2'-hydroxyl of the adenosine moiety of NAD to yield NADP. The sequence is that of NAD kinase from Rickettsia bellii (strain OSU 85-389).